We begin with the raw amino-acid sequence, 261 residues long: Calbindin (261 aa).

The residue at position 2 (Ala-2) is an N-acetylalanine. Residues 2-7 are interaction with RANBP9; sequence AESHLQ. EF-hand domains lie at 11–46, 53–88, 98–133, 142–177, and 186–221; these read ITAS…LLQA, ELSP…EENF, KSCE…LLEK, KLAE…QENF, and MCGK…LCEK. Residues Asp-24, Asp-26, Ser-28, Tyr-30, and Glu-35 each contribute to the Ca(2+) site. The Ca(2+) site is built by Asp-111, Asp-113, Ser-115, Glu-122, Asp-155, Asn-157, Asp-159, Lys-161, Glu-166, Asp-199, Asp-201, Asn-203, Tyr-205, and Glu-210.

This sequence belongs to the calbindin family. As to quaternary structure, interacts with RANBP9. As to expression, expressed in the modiolar nerve root and in bushy neurons in the ventral cochlear nucleus (at protein level).

Functionally, buffers cytosolic calcium. May stimulate a membrane Ca(2+)-ATPase and a 3',5'-cyclic nucleotide phosphodiesterase. The sequence is that of Calbindin (Calb1) from Mus musculus (Mouse).